We begin with the raw amino-acid sequence, 568 residues long: Serine/threonine-protein kinase RIO1 (568 aa).

Disordered regions lie at residues 14–70 and 83–109; these read GQFD…DDDW and YVWN…STPA. A phosphoserine mark is found at serine 21 and serine 22. The span at 24 to 38 shows a compositional bias: basic and acidic residues; sequence SENRDLKTVKEKDDI. Acidic residues predominate over residues 51–70; that stretch reads GEGEIEDEEEEGYDDDDDDW. Over residues 87-105 the composition is skewed to polar residues; sequence GGSNPQANRQTSDSSSAKM. The region spanning 180–479 is the Protein kinase domain; it reads TEINGCISTG…TGLKKDLSGV (300 aa). The ATP site is built by lysine 208, serine 278, and isoleucine 280. Aspartate 324 functions as the Proton acceptor in the catalytic mechanism. Positions 329 and 341 each coordinate Mg(2+). The active-site 4-aspartylphosphate intermediate is aspartate 341. The disordered stretch occupies residues 490–568; sequence VEERTCSDSE…EKTAKTKKGK (79 aa). A compositionally biased stretch (acidic residues) spans 497-513; it reads DSEDIGSSECSDTDSEE. Residues 514–543 show a composition bias toward basic and acidic residues; it reads QGDHARPKKHTTDPDIDKKERKKMVKEAQR. Residues 544 to 568 show a composition bias toward basic residues; that stretch reads EKRKNKIPKHVKKRKEKTAKTKKGK.

The protein belongs to the protein kinase superfamily. RIO-type Ser/Thr kinase family. In terms of assembly, associates with the precursor of the 40S ribosome subunit. Interacts (via its N-terminus) with PRMT5 (via its N-terminus). Interacts with WDR77. Found in a PRMT5 complex composed of PRMT5, WDR77 and RIOK1. Interacts (via its C-terminus) with NCL; this interaction targets NCL for PRTM5 methylation. Requires Mg(2+) as cofactor.

The protein localises to the cytoplasm. It localises to the cytosol. It catalyses the reaction L-seryl-[protein] + ATP = O-phospho-L-seryl-[protein] + ADP + H(+). The catalysed reaction is L-threonyl-[protein] + ATP = O-phospho-L-threonyl-[protein] + ADP + H(+). It carries out the reaction ATP + H2O = ADP + phosphate + H(+). Its function is as follows. Involved in the final steps of cytoplasmic maturation of the 40S ribosomal subunit. Involved in processing of 18S-E pre-rRNA to the mature 18S rRNA. Required for the recycling of NOB1 and PNO1 from the late 40S precursor. The association with the very late 40S subunit intermediate may involve a translation-like checkpoint point cycle preceeding the binding to the 60S ribosomal subunit. Despite the protein kinase domain is proposed to act predominantly as an ATPase. The catalytic activity regulates its dynamic association with the 40S subunit. In addition to its role in ribosomal biogenesis acts as an adapter protein by recruiting NCL/nucleolin the to PRMT5 complex for its symmetrical methylation. The protein is Serine/threonine-protein kinase RIO1 of Homo sapiens (Human).